Consider the following 338-residue polypeptide: tRNA N6-adenosine threonylcarbamoyltransferase (338 aa).

Fe cation is bound by residues His111 and His115. Substrate is bound by residues 134 to 138 (LVSGG), Asp167, Gly180, and Asn272. Asp300 is a Fe cation binding site.

This sequence belongs to the KAE1 / TsaD family. The cofactor is Fe(2+).

It is found in the cytoplasm. It catalyses the reaction L-threonylcarbamoyladenylate + adenosine(37) in tRNA = N(6)-L-threonylcarbamoyladenosine(37) in tRNA + AMP + H(+). In terms of biological role, required for the formation of a threonylcarbamoyl group on adenosine at position 37 (t(6)A37) in tRNAs that read codons beginning with adenine. Is involved in the transfer of the threonylcarbamoyl moiety of threonylcarbamoyl-AMP (TC-AMP) to the N6 group of A37, together with TsaE and TsaB. TsaD likely plays a direct catalytic role in this reaction. The polypeptide is tRNA N6-adenosine threonylcarbamoyltransferase (Shewanella sp. (strain ANA-3)).